The following is a 312-amino-acid chain: Olfactory receptor 8G50 (312 aa).

The Extracellular portion of the chain corresponds to 1–28 (MAYSNQSRVTEFIISGLTNKPELQLPLF). N-linked (GlcNAc...) asparagine glycosylation occurs at Asn-5. The chain crosses the membrane as a helical span at residues 29–49 (LLFLGIYLFTVLGNLGMIILI). Residues 50–56 (LLSSHLH) lie on the Cytoplasmic side of the membrane. Residues 57 to 77 (TPMYFFLSSLSFIDLCYSTII) form a helical membrane-spanning segment. Over 78 to 99 (TPKMLVNFVTTKNVISYQECMT) the chain is Extracellular. An intrachain disulfide couples Cys-97 to Cys-189. Residues 100-120 (QLYFFIAFVISECHMLAAMAY) form a helical membrane-spanning segment. Residues 121-143 (DRYVAICNPLLYNVTMSYQVCSW) are Cytoplasmic-facing. The helical transmembrane segment at 144–164 (MVGGVYGMGFIGAAIHTFCML) threads the bilayer. Topologically, residues 165-204 (RVVFCKDNIINHYFCDLFPLMELACSSTYVNEVVLLSLSA) are extracellular. Residues 205–225 (FNIFIPTLTILGSYIFIIISI) traverse the membrane as a helical segment. The Cytoplasmic segment spans residues 226-244 (LRIKSTEGRFKAFSTCSSH). The chain crosses the membrane as a helical span at residues 245 to 265 (FSAVSVFFGSLAFMYLQPFSV). At 266–274 (SSKDKGKVS) the chain is on the extracellular side. A helical transmembrane segment spans residues 275 to 292 (SVFYTTIVPMLNPMIYSL). The Cytoplasmic segment spans residues 293-312 (RNRDVKLALNKLFQKKKFHV).

This sequence belongs to the G-protein coupled receptor 1 family.

The protein localises to the cell membrane. Its function is as follows. Odorant receptor. The polypeptide is Olfactory receptor 8G50 (Mus musculus (Mouse)).